The chain runs to 254 residues: Citrate synthase-lysine N-methyltransferase CSKMT, mitochondrial (254 aa).

The transit peptide at 1 to 45 (MLLNRFLVPLRSLQKLTQARRWHQTSLINDLVVNMDKKAMWDRFY) directs the protein to the mitochondrion.

This sequence belongs to the methyltransferase superfamily.

The protein resides in the mitochondrion. The enzyme catalyses L-lysyl-[citrate synthase] + S-adenosyl-L-methionine = N(6)-methyl-L-lysyl-[citrate synthase] + S-adenosyl-L-homocysteine + H(+). It catalyses the reaction N(6)-methyl-L-lysyl-[citrate synthase] + S-adenosyl-L-methionine = N(6),N(6)-dimethyl-L-lysyl-[citrate synthase] + S-adenosyl-L-homocysteine + H(+). It carries out the reaction N(6),N(6)-dimethyl-L-lysyl-[citrate synthase] + S-adenosyl-L-methionine = N(6),N(6),N(6)-trimethyl-L-lysyl-[citrate synthase] + S-adenosyl-L-homocysteine + H(+). With respect to regulation, citrate synthase-lysine methyltransferase activity is inhibited by S-adenosylhomocysteine (AdoHcy) and oxaloacetate (OAA). Its function is as follows. Protein-lysine methyltransferase that selectively trimethylates citrate synthase (CS) in mitochondria. Seems to conduct trimethylation in a highly distributive manner rather than in a processive manner, and thus introduces a single methyl group per binding event. The polypeptide is Citrate synthase-lysine N-methyltransferase CSKMT, mitochondrial (Danio rerio (Zebrafish)).